We begin with the raw amino-acid sequence, 179 residues long: Large ribosomal subunit protein uL10 (179 aa).

The protein belongs to the universal ribosomal protein uL10 family. In terms of assembly, part of the ribosomal stalk of the 50S ribosomal subunit. The N-terminus interacts with L11 and the large rRNA to form the base of the stalk. The C-terminus forms an elongated spine to which L12 dimers bind in a sequential fashion forming a multimeric L10(L12)X complex.

Forms part of the ribosomal stalk, playing a central role in the interaction of the ribosome with GTP-bound translation factors. This Mycolicibacterium vanbaalenii (strain DSM 7251 / JCM 13017 / BCRC 16820 / KCTC 9966 / NRRL B-24157 / PYR-1) (Mycobacterium vanbaalenii) protein is Large ribosomal subunit protein uL10.